Here is a 236-residue protein sequence, read N- to C-terminus: uncharacterized protein (236 aa).

The Response regulatory domain maps to 3-116 (TCLIVDDELF…RLSKTLKRVR (114 aa)). The residue at position 54 (Asp-54) is a 4-aspartylphosphate. In terms of domain architecture, HTH LytTR-type spans 135-235 (LPCYSGSKLK…LKSLKQLFGF (101 aa)).

This is an uncharacterized protein from Shewanella oneidensis (strain ATCC 700550 / JCM 31522 / CIP 106686 / LMG 19005 / NCIMB 14063 / MR-1).